A 272-amino-acid polypeptide reads, in one-letter code: MGKFNLGALRVRQNALAQKSSGKISQTPCWVDIVSEIPPATVLVRNLPQQHALVQQRVKTLPGKSRPQTVIEEREIRRIKTKKASRMFQPMQIRYEEDELRKQFFQDHPWELARPRVVLETNGNDHARYDWSRLQQRGKRLDGESVVQRQLYLLNNVPDITKGEAYDIARREFYQLRLQEDIERRVAQEEARATGAYFGPDMMQVGMELENQEYDRWKIWAEKEAEQASQRLAAFAGATGGAKEESDPAILPELEVAESTSESAQPAEIRTG.

The tract at residues 236-272 is disordered; the sequence is AGATGGAKEESDPAILPELEVAESTSESAQPAEIRTG.

This sequence belongs to the mitochondrion-specific ribosomal protein mS23 family. Component of the mitochondrial small ribosomal subunit.

The protein resides in the mitochondrion. The chain is Small ribosomal subunit protein mS23 (RSM25) from Coccidioides immitis (strain RS) (Valley fever fungus).